The primary structure comprises 522 residues: Zinc finger and BTB domain-containing protein 18 (522 aa).

A BTB domain is found at 24–91 (CDCTVLVGDA…MYEGKLQFKD (68 aa)). Residues 121–143 (ATTEADSTKKEEDASSCSDKVES) show a composition bias toward basic and acidic residues. Residues 121-165 (ATTEADSTKKEEDASSCSDKVESLSDGSSHMAGDLPSDEDEGEDE) are disordered. The residue at position 157 (serine 157) is a Phosphoserine. Lysine 273 participates in a covalent cross-link: Glycyl lysine isopeptide (Lys-Gly) (interchain with G-Cter in SUMO2). The tract at residues 310–427 (EPAHLAPLRE…TFSCMYTLKR (118 aa)) is interaction with DNMT3A. 4 C2H2-type zinc fingers span residues 370–392 (FMCP…LSTH), 410–432 (PTCS…ERTH), 438–460 (YTCT…AVVH), and 466–489 (HACK…RKFH). A phosphoserine mark is found at serine 516 and serine 517.

It belongs to the krueppel C2H2-type zinc-finger protein family. ZBTB18 subfamily. In terms of assembly, interacts with DNMT3A.

It is found in the nucleus. Transcriptional repressor that plays a role in various developmental processes such as myogenesis and brain development. Specifically binds the consensus DNA sequence 5'-[AC]ACATCTG[GT][AC]-3' which contains the E box core, and acts by recruiting chromatin remodeling multiprotein complexes. Plays a key role in myogenesis by directly repressing the expression of ID2 and ID3, 2 inhibitors of skeletal myogenesis. Also involved in controlling cell division of progenitor cells and regulating the survival of postmitotic cortical neurons. May also play a role in the organization of chromosomes in the nucleus. This chain is Zinc finger and BTB domain-containing protein 18 (ZBTB18), found in Bos taurus (Bovine).